The following is a 288-amino-acid chain: Thymidylate synthase (288 aa).

Arginine 21 serves as a coordination point for dUMP. Residue asparagine 51 participates in (6R)-5,10-methylene-5,6,7,8-tetrahydrofolate binding. Residue 150 to 151 (RR) participates in dUMP binding. The active-site Nucleophile is cysteine 170. DUMP-binding positions include 190–193 (RSGD), asparagine 201, and 231–233 (HIY). Aspartate 193 provides a ligand contact to (6R)-5,10-methylene-5,6,7,8-tetrahydrofolate. Residue alanine 287 participates in (6R)-5,10-methylene-5,6,7,8-tetrahydrofolate binding.

This sequence belongs to the thymidylate synthase family. Bacterial-type ThyA subfamily. In terms of assembly, homodimer.

It is found in the cytoplasm. The enzyme catalyses dUMP + (6R)-5,10-methylene-5,6,7,8-tetrahydrofolate = 7,8-dihydrofolate + dTMP. The protein operates within pyrimidine metabolism; dTTP biosynthesis. Functionally, catalyzes the reductive methylation of 2'-deoxyuridine-5'-monophosphate (dUMP) to 2'-deoxythymidine-5'-monophosphate (dTMP) while utilizing 5,10-methylenetetrahydrofolate (mTHF) as the methyl donor and reductant in the reaction, yielding dihydrofolate (DHF) as a by-product. This enzymatic reaction provides an intracellular de novo source of dTMP, an essential precursor for DNA biosynthesis. The chain is Thymidylate synthase from Phytoplasma mali (strain AT).